An 82-amino-acid polypeptide reads, in one-letter code: Small ribosomal subunit protein bS16 (82 aa).

Belongs to the bacterial ribosomal protein bS16 family.

The chain is Small ribosomal subunit protein bS16 from Sodalis glossinidius (strain morsitans).